A 271-amino-acid polypeptide reads, in one-letter code: Low choriolytic enzyme (271 aa).

An N-terminal signal peptide occupies residues 1-20 (MDLLAKASVLLLLLLSLSNA). Residues 21-71 (QTDNMEEAENGSSKEEIDESELEDVSSIIFRMNNNSMEELLEGDLVLPKTR) constitute a propeptide, activation peptide. Residues asparagine 30 and asparagine 54 are each glycosylated (N-linked (GlcNAc...) asparagine). Residues 72 to 271 (NAMKCFGAPD…ILRVNKLYKC (200 aa)) enclose the Peptidase M12A domain. 3 disulfides stabilise this stretch: cysteine 76–cysteine 83, cysteine 123–cysteine 271, and cysteine 144–cysteine 164. Histidine 172 contacts Zn(2+). Residue glutamate 173 is part of the active site. Zn(2+) is bound by residues histidine 176 and histidine 182. Residue asparagine 211 is glycosylated (N-linked (GlcNAc...) asparagine).

Requires Zn(2+) as cofactor.

The protein resides in the zymogen granule. It catalyses the reaction Hydrolysis of the inner layer of fish egg envelope. Also hydrolysis of casein and small molecule substrates such as succinyl-Leu-Leu-Val-Tyr-|-7-(4-methyl)coumarylamide.. Participates in the breakdown of the egg envelope, which is derived from the egg extracellular matrix, at the time of hatching. Thus allowing the newly hatched fish to swim free. LCE solubilizes the egg envelope only after it has been swollen by the action of HCE. The sequence is that of Low choriolytic enzyme (lce) from Oryzias latipes (Japanese rice fish).